A 524-amino-acid chain; its full sequence is Phenylalanine--tRNA ligase alpha subunit (524 aa).

L-phenylalanine-binding residues include T362, Y441, and F467.

This sequence belongs to the class-II aminoacyl-tRNA synthetase family. Phe-tRNA synthetase alpha subunit type 2 subfamily. As to quaternary structure, tetramer of two alpha and two beta subunits. Requires Mg(2+) as cofactor.

It localises to the cytoplasm. The enzyme catalyses tRNA(Phe) + L-phenylalanine + ATP = L-phenylalanyl-tRNA(Phe) + AMP + diphosphate + H(+). In Methanopyrus kandleri (strain AV19 / DSM 6324 / JCM 9639 / NBRC 100938), this protein is Phenylalanine--tRNA ligase alpha subunit.